Here is a 290-residue protein sequence, read N- to C-terminus: ATP synthase gamma chain (290 aa).

The protein belongs to the ATPase gamma chain family. F-type ATPases have 2 components, CF(1) - the catalytic core - and CF(0) - the membrane proton channel. CF(1) has five subunits: alpha(3), beta(3), gamma(1), delta(1), epsilon(1). CF(0) has three main subunits: a, b and c.

Its subcellular location is the cell membrane. Functionally, produces ATP from ADP in the presence of a proton gradient across the membrane. The gamma chain is believed to be important in regulating ATPase activity and the flow of protons through the CF(0) complex. In Wolbachia pipientis subsp. Culex pipiens (strain wPip), this protein is ATP synthase gamma chain.